Consider the following 387-residue polypeptide: Protein ERD1 homolog 2 (387 aa).

Transmembrane regions (helical) follow at residues 20–40, 92–112, 126–146, 177–197, 217–237, 252–272, 285–305, and 326–346; these read IGLL…LIYI, AGYC…ILFL, PIYP…PFPW, FIVS…YIFG, GTFF…LQCL, LLSA…AIIH, GYLF…TFLW, and FPMF…VTWS. Positions 212 to 387 constitute an EXS domain; the sequence is DLKCDGTFFV…LFFHLDAISS (176 aa).

Belongs to the ERD1 family.

Its subcellular location is the membrane. The sequence is that of Protein ERD1 homolog 2 from Schizosaccharomyces pombe (strain 972 / ATCC 24843) (Fission yeast).